The primary structure comprises 475 residues: Aspartyl/glutamyl-tRNA(Asn/Gln) amidotransferase subunit B (475 aa).

The protein belongs to the GatB/GatE family. GatB subfamily. In terms of assembly, heterotrimer of A, B and C subunits.

It catalyses the reaction L-glutamyl-tRNA(Gln) + L-glutamine + ATP + H2O = L-glutaminyl-tRNA(Gln) + L-glutamate + ADP + phosphate + H(+). The catalysed reaction is L-aspartyl-tRNA(Asn) + L-glutamine + ATP + H2O = L-asparaginyl-tRNA(Asn) + L-glutamate + ADP + phosphate + 2 H(+). Functionally, allows the formation of correctly charged Asn-tRNA(Asn) or Gln-tRNA(Gln) through the transamidation of misacylated Asp-tRNA(Asn) or Glu-tRNA(Gln) in organisms which lack either or both of asparaginyl-tRNA or glutaminyl-tRNA synthetases. The reaction takes place in the presence of glutamine and ATP through an activated phospho-Asp-tRNA(Asn) or phospho-Glu-tRNA(Gln). The chain is Aspartyl/glutamyl-tRNA(Asn/Gln) amidotransferase subunit B from Thermodesulfovibrio yellowstonii (strain ATCC 51303 / DSM 11347 / YP87).